Reading from the N-terminus, the 311-residue chain is tRNA-cytidine(32) 2-sulfurtransferase (311 aa).

The PP-loop motif signature appears at 47-52 (SGGKDS). [4Fe-4S] cluster is bound by residues Cys-122, Cys-125, and Cys-213.

It belongs to the TtcA family. In terms of assembly, homodimer. Mg(2+) serves as cofactor. It depends on [4Fe-4S] cluster as a cofactor.

The protein localises to the cytoplasm. It carries out the reaction cytidine(32) in tRNA + S-sulfanyl-L-cysteinyl-[cysteine desulfurase] + AH2 + ATP = 2-thiocytidine(32) in tRNA + L-cysteinyl-[cysteine desulfurase] + A + AMP + diphosphate + H(+). Its pathway is tRNA modification. Functionally, catalyzes the ATP-dependent 2-thiolation of cytidine in position 32 of tRNA, to form 2-thiocytidine (s(2)C32). The sulfur atoms are provided by the cysteine/cysteine desulfurase (IscS) system. The sequence is that of tRNA-cytidine(32) 2-sulfurtransferase from Escherichia fergusonii (strain ATCC 35469 / DSM 13698 / CCUG 18766 / IAM 14443 / JCM 21226 / LMG 7866 / NBRC 102419 / NCTC 12128 / CDC 0568-73).